The following is a 294-amino-acid chain: MSKQPQQSLTLRSPAKLNLFLHIVGQRPDGYHLLQSVFQLIDWTDTVHLKRIPENEVRRINPIPDVSPEQDLVVRAAKLVKDFCKIDLGVEIDLKKEIPMGAGLGGGSSDAASTLIGLNTLWNLDLDKKTLSNLGLKLGADVPFFIFGQNAFVEGIGEQIQEISLENRDFLVIFPNRAIPTVSIFHDPELTRDHAPITIDGFLASPLSNQINDCQAVAMRICPEVKQALDWVSQALPGSAPRMSGSGSSVFAVLDPKTDSVKLENLLQSLPKGWIGRVVRGLNKNPAYNLISSD.

Lys-16 is an active-site residue. Position 99-109 (99-109 (PMGAGLGGGSS)) interacts with ATP. Residue Asp-141 is part of the active site.

This sequence belongs to the GHMP kinase family. IspE subfamily.

The catalysed reaction is 4-CDP-2-C-methyl-D-erythritol + ATP = 4-CDP-2-C-methyl-D-erythritol 2-phosphate + ADP + H(+). The protein operates within isoprenoid biosynthesis; isopentenyl diphosphate biosynthesis via DXP pathway; isopentenyl diphosphate from 1-deoxy-D-xylulose 5-phosphate: step 3/6. Functionally, catalyzes the phosphorylation of the position 2 hydroxy group of 4-diphosphocytidyl-2C-methyl-D-erythritol. The protein is 4-diphosphocytidyl-2-C-methyl-D-erythritol kinase of Polynucleobacter asymbioticus (strain DSM 18221 / CIP 109841 / QLW-P1DMWA-1) (Polynucleobacter necessarius subsp. asymbioticus).